We begin with the raw amino-acid sequence, 344 residues long: Probable dual-specificity RNA methyltransferase RlmN (344 aa).

Residue E90 is the Proton acceptor of the active site. One can recognise a Radical SAM core domain in the interval 96 to 326 (YKYGNAICIS…VTIRRELGSS (231 aa)). Cysteines 103 and 331 form a disulfide. 3 residues coordinate [4Fe-4S] cluster: C110, C114, and C117. Residues 157-158 (GE), S189, 212-214 (SLH), and N288 each bind S-adenosyl-L-methionine. C331 acts as the S-methylcysteine intermediate in catalysis.

This sequence belongs to the radical SAM superfamily. RlmN family. Requires [4Fe-4S] cluster as cofactor.

It is found in the cytoplasm. It carries out the reaction adenosine(2503) in 23S rRNA + 2 reduced [2Fe-2S]-[ferredoxin] + 2 S-adenosyl-L-methionine = 2-methyladenosine(2503) in 23S rRNA + 5'-deoxyadenosine + L-methionine + 2 oxidized [2Fe-2S]-[ferredoxin] + S-adenosyl-L-homocysteine. The enzyme catalyses adenosine(37) in tRNA + 2 reduced [2Fe-2S]-[ferredoxin] + 2 S-adenosyl-L-methionine = 2-methyladenosine(37) in tRNA + 5'-deoxyadenosine + L-methionine + 2 oxidized [2Fe-2S]-[ferredoxin] + S-adenosyl-L-homocysteine. Its function is as follows. Specifically methylates position 2 of adenine 2503 in 23S rRNA and position 2 of adenine 37 in tRNAs. The chain is Probable dual-specificity RNA methyltransferase RlmN from Caldicellulosiruptor saccharolyticus (strain ATCC 43494 / DSM 8903 / Tp8T 6331).